A 97-amino-acid chain; its full sequence is MGSRFFLALFLALLVLGNEVQGTEEDDPGSSALLDTVQEHLFSYWNSAKAAAGELYQKTYLTSVDEKLRDMYSKSSAAMTTYAGIFTDQLLTLLKGE.

A signal peptide spans 1–22 (MGSRFFLALFLALLVLGNEVQG). The segment at 63 to 71 (SVDEKLRDM) is lipid binding. Residues 75 to 97 (SSAAMTTYAGIFTDQLLTLLKGE) form a lipoprotein lipase cofactor region.

This sequence belongs to the apolipoprotein C2 family. In terms of processing, proapolipoprotein C-II is synthesized as a sialic acid containing glycoprotein which is subsequently desialylated prior to its proteolytic processing. Post-translationally, proapolipoprotein C-II, the major form found in plasma undergoes proteolytic cleavage of its N-terminal hexapeptide to generate the mature form apolipoprotein C-II, which occurs as the minor form in plasma.

It localises to the secreted. Its function is as follows. Component of chylomicrons, very low-density lipoproteins (VLDL), low-density lipoproteins (LDL), and high-density lipoproteins (HDL) in plasma. Plays an important role in lipoprotein metabolism as an activator of lipoprotein lipase. The protein is Apolipoprotein C-II (Apoc2) of Rattus norvegicus (Rat).